The following is a 1486-amino-acid chain: Chromosome partition protein MukB (1486 aa).

34 to 41 provides a ligand contact to ATP; that stretch reads GGNGAGKS. 3 coiled-coil regions span residues 326 to 418, 444 to 480, and 509 to 603; these read LEAD…QYNQ, LETF…QAYQ, and RHLA…RAPV. Residues 666 to 783 are flexible hinge; the sequence is PGGSEDQRLN…EVPLFGRAAR (118 aa). 3 coiled-coil regions span residues 835–923, 977–1115, and 1209–1266; these read EAEI…AKLE, EMLS…TAKA, and VEAI…QNVS.

This sequence belongs to the SMC family. MukB subfamily. In terms of assembly, homodimerization via its hinge domain. Binds to DNA via its C-terminal region. Interacts, and probably forms a ternary complex, with MukE and MukF via its C-terminal region. The complex formation is stimulated by calcium or magnesium. Interacts with tubulin-related protein FtsZ.

It localises to the cytoplasm. Its subcellular location is the nucleoid. In terms of biological role, plays a central role in chromosome condensation, segregation and cell cycle progression. Functions as a homodimer, which is essential for chromosome partition. Involved in negative DNA supercoiling in vivo, and by this means organize and compact chromosomes. May achieve or facilitate chromosome segregation by condensation DNA from both sides of a centrally located replisome during cell division. The sequence is that of Chromosome partition protein MukB from Escherichia coli (strain 55989 / EAEC).